Reading from the N-terminus, the 170-residue chain is Transcription factor E (170 aa).

An HTH TFE/IIEalpha-type domain is found at 1 to 93 (MKDAYLYVVE…AWYVDDEIIR (93 aa)).

It belongs to the TFE family. In terms of assembly, monomer. Interaction with RNA polymerase subunits RpoF and RpoE is necessary for Tfe stimulatory transcription activity. Able to interact with Tbp and RNA polymerase in the absence of DNA promoter. Interacts both with the preinitiation and elongation complexes.

In terms of biological role, transcription factor that plays a role in the activation of archaeal genes transcribed by RNA polymerase. Facilitates transcription initiation by enhancing TATA-box recognition by TATA-box-binding protein (Tbp), and transcription factor B (Tfb) and RNA polymerase recruitment. Not absolutely required for transcription in vitro, but particularly important in cases where Tbp or Tfb function is not optimal. It dynamically alters the nucleic acid-binding properties of RNA polymerases by stabilizing the initiation complex and destabilizing elongation complexes. Seems to translocate with the RNA polymerase following initiation and acts by binding to the non template strand of the transcription bubble in elongation complexes. The protein is Transcription factor E of Pyrobaculum arsenaticum (strain DSM 13514 / JCM 11321 / PZ6).